The sequence spans 508 residues: Cytochrome P450 4A12 (508 aa).

Transmembrane regions (helical) follow at residues 10-30 and 120-140; these read IFPG…VLLL and FLAP…WFQH. Glutamate 319 contacts heme. Serine 438 carries the phosphoserine modification. Cysteine 455 contributes to the heme binding site.

It belongs to the cytochrome P450 family. Requires heme as cofactor. As to expression, expressed at proximal straight tubules and preglomerular arteries of the outer medulla as well in the cortex regions of kidney (at protein level).

Its subcellular location is the endoplasmic reticulum membrane. It is found in the microsome membrane. It carries out the reaction an organic molecule + reduced [NADPH--hemoprotein reductase] + O2 = an alcohol + oxidized [NADPH--hemoprotein reductase] + H2O + H(+). The catalysed reaction is dodecanoate + reduced [NADPH--hemoprotein reductase] + O2 = 12-hydroxydodecanoate + oxidized [NADPH--hemoprotein reductase] + H2O + H(+). It catalyses the reaction dodecanoate + reduced [NADPH--hemoprotein reductase] + O2 = (11R)-hydroxydodecanoate + oxidized [NADPH--hemoprotein reductase] + H2O + H(+). The enzyme catalyses (5Z,8Z,11Z,14Z)-eicosatetraenoate + reduced [NADPH--hemoprotein reductase] + O2 = 20-hydroxy-(5Z,8Z,11Z,14Z)-eicosatetraenoate + oxidized [NADPH--hemoprotein reductase] + H2O + H(+). It carries out the reaction prostaglandin A1 + reduced [NADPH--hemoprotein reductase] + O2 = 20-hydroxy prostaglandin A1 + oxidized [NADPH--hemoprotein reductase] + H2O + H(+). The protein operates within lipid metabolism; fatty acid metabolism. With respect to regulation, activated by cytochrome b5 and phosphatidylserine. In terms of biological role, a cytochrome P450 monooxygenase involved in the metabolism of fatty acids. Catalyzes predominantly the oxidation of the terminal carbon (omega-oxidation) of saturated and unsaturated fatty acids. May act as a major omega-hydroxylase for dodecanoic (lauric) acid in kidney. At preglomerular arteries, may participate in omega-hydroxylation of (5Z,8Z,11Z,14Z)-eicosatetraenoic acid (arachidonate) to 20-hydroxyeicosatetraenoic acid (20-HETE), a signaling molecule acting both as vasoconstrictive and natriuretic with overall effect on arterial blood pressure. Can also catalyze the oxidation of the penultimate carbon (omega-1 oxidation) of fatty acids with lower efficiency, displaying a preference for the (R)-stereoisomer. Mechanistically, uses molecular oxygen inserting one oxygen atom into a substrate, and reducing the second into a water molecule, with two electrons provided by NADPH via cytochrome P450 reductase (NADPH--hemoprotein reductase). In Rattus norvegicus (Rat), this protein is Cytochrome P450 4A12 (Cyp4a12).